The following is a 612-amino-acid chain: Elongation factor 4 (612 aa).

Residues 11–193 (KHIRNFSIIA…RIVTDVPAPS (183 aa)) form the tr-type G domain. GTP-binding positions include 23-28 (DHGKST) and 140-143 (NKVD).

The protein belongs to the TRAFAC class translation factor GTPase superfamily. Classic translation factor GTPase family. LepA subfamily.

The protein localises to the cell membrane. The enzyme catalyses GTP + H2O = GDP + phosphate + H(+). Its function is as follows. Required for accurate and efficient protein synthesis under certain stress conditions. May act as a fidelity factor of the translation reaction, by catalyzing a one-codon backward translocation of tRNAs on improperly translocated ribosomes. Back-translocation proceeds from a post-translocation (POST) complex to a pre-translocation (PRE) complex, thus giving elongation factor G a second chance to translocate the tRNAs correctly. Binds to ribosomes in a GTP-dependent manner. This is Elongation factor 4 from Lacticaseibacillus paracasei (strain ATCC 334 / BCRC 17002 / CCUG 31169 / CIP 107868 / KCTC 3260 / NRRL B-441) (Lactobacillus paracasei).